The primary structure comprises 825 residues: MAAGKFASLPRNMPVNHQFPLASSMDLLSSKSPLTEHRPDAYQDVSIHGTLPRKKKGPPPIRSCDDFSHMGTLPHSKSPQQNSPVTQDSIQESPWQDRHCETFTFRDPHLLDPTLEYVKFSKERHIMDRTPEKLKKELEEELLLSSEDLRSHAWYHGRIPRQVSENLVQRDGDFLVRDSLSSPGNFVLTCQWKNLAQHFKINRTVLRLSEAYSRVQYQFEMESFDSIPGLVRCYVGNRRPISQQSGAIIFQPINRTVPLRCLEERYGISPGQAREGSLTEGRPDVTKRLSLTMGGVQAREQNLPRGNLLRNKEKSGSQPACLDHMQDRRALSLKAHQSESYLPIGCKLPPQSSGVDTSPCPNSPVFRTGSEPALSPAVVRRVSSDARAGEALRGSDSQLCPKPPPKPCKVPFLKAPSSPSAWLNSEANYCELNPAFATGCGRGAKLPLCAQGSPTELLTAKQNGALGPRNSGINYLILDDDDRERPWEPAAAQTEKGQWDKGEFVAPLLETVSSFRPNDFKSKFLPPENKPLETAMLKRAKELFTNNDPKVIAQHILSMDCRVARILEVSEEMRRNMGVSSGLELITLPHGHQLRLDIIERHSTMAIGIAVYILGCTGTLEDRAATLSKVIQVAVELKDSMGDLYSFSALMKALEMPQITRLEKTWTALRHQYTQTAILYEKQLKPFSKILHEGRESTCVPPNNVSVPLLMPLVTLMERQAVTFEGTDMWEKNDQSCEIMLNHLATARLMAEATDSYRMNAERILAGFQPDEEMNEICKTEFQMRLLWGSKGAQVNQAERYEKFNQILTALSRKLEPPPVKQAEL.

Ala2 is modified (N-acetylalanine). Residues 31–93 form a disordered region; that stretch reads KSPLTEHRPD…PVTQDSIQES (63 aa). Residues Ser32, Ser78, Ser83, Ser182, and Ser290 each carry the phosphoserine modification. The segment covering 75–93 has biased composition (polar residues); the sequence is HSKSPQQNSPVTQDSIQES. The SH2 domain maps to 154–253; the sequence is WYHGRIPRQV…QSGAIIFQPI (100 aa). Position 334 is an N6-methyllysine (Lys334). A phosphoserine mark is found at Ser358, Ser363, and Ser375. Residue Arg442 is modified to Omega-N-methylarginine. The residue at position 471 (Ser471) is a Phosphoserine. One can recognise a Ras-GEF domain in the interval 548–818; sequence DPKVIAQHIL…TALSRKLEPP (271 aa). The tract at residues 744 to 748 is mediates the interaction with BCAR1/p130CAS; sequence LATAR.

In terms of assembly, part of a complex comprised of PTPRA, BCAR1, BCAR3 (via SH2 domain) and SRC; the formation of the complex is dependent on integrin mediated-tyrosine phosphorylation of PTPRA. Within the complex, interacts (via SH2 domain) with PTPRA (when phosphorylated on 'Tyr-798'). Interacts (via Ras-GEF domain) with BCAR1. Interacts (via Ras-GEF domain) with NEDD9. Interacts with PTK2/FAK1. Interacts with PTPN1. Interacts (via SH2 domain) with EGFR (when tyrosine-phosphorylated). Post-translationally, phosphorylated on tyrosine residues.

It is found in the cytoplasm. The protein localises to the cell junction. The protein resides in the focal adhesion. Acts as an adapter protein downstream of several growth factor receptors to promote cell proliferation, migration, and redistribution of actin fibers. Specifically involved in INS/insulin signaling pathway by mediating MAPK1/ERK2-MAPK3/ERK1 activation and DNA synthesis. Promotes insulin-mediated membrane ruffling. In response to vasoconstrictor peptide EDN1, involved in the activation of RAP1 downstream of PTK2B via interaction with phosphorylated BCAR1. Inhibits cell migration and invasion via regulation of TGFB-mediated matrix digestion, actin filament rearrangement, and inhibition of invadopodia activity. May inhibit TGFB-SMAD signaling, via facilitating BCAR1 and SMAD2 and/or SMAD3 interaction. Regulates EGF-induced DNA synthesis. Required for the maintenance of ocular lens morphology and structural integrity, potentially via regulation of focal adhesion complex signaling. Acts upstream of PTPRA to regulate the localization of BCAR1 and PTPRA to focal adhesions, via regulation of SRC-mediated phosphorylation of PTPRA. Positively regulates integrin-induced tyrosine phosphorylation of BCAR1. Acts as a guanine nucleotide exchange factor (GEF) for small GTPases RALA, RAP1A and RRAS. However, in a contrasting study, lacks GEF activity towards RAP1. In Macaca fascicularis (Crab-eating macaque), this protein is Breast cancer anti-estrogen resistance protein 3 homolog (BCAR3).